Reading from the N-terminus, the 394-residue chain is Cytochrome c oxidase subunit 2, mitochondrial (394 aa).

Residues 1 to 119 constitute a mitochondrion transit peptide; the sequence is ILCPLEAFIV…RNSRLIHSTS (119 aa). The Mitochondrial intermembrane portion of the chain corresponds to 120 to 181; sequence KIVPNSEIQN…MQGIIDLHHD (62 aa). Residues 182–198 traverse the membrane as a helical segment; the sequence is IFFFVIQIGVFVSWVLL. The Mitochondrial matrix segment spans residues 199 to 226; that stretch reads RALWHFRSKMNPIPQRIVHGTTIEILWT. Residues 227–243 traverse the membrane as a helical segment; it reads IFPSVILMFIAIPSFAL. Over 244 to 394 the chain is Mitochondrial intermembrane; it reads LYSMDDIVVD…YGSWVSSQVN (151 aa). The Cu cation site is built by His327, Cys362, Glu364, Cys366, His370, and Met373. Glu364 contacts Mg(2+).

This sequence belongs to the cytochrome c oxidase subunit 2 family. In terms of assembly, component of the cytochrome c oxidase (complex IV, CIV), a multisubunit enzyme composed of a catalytic core of 3 subunits and several supernumerary subunits. The complex exists as a monomer or a dimer and forms supercomplexes (SCs) in the inner mitochondrial membrane with ubiquinol-cytochrome c oxidoreductase (cytochrome b-c1 complex, complex III, CIII). It depends on Cu cation as a cofactor.

It localises to the mitochondrion inner membrane. The enzyme catalyses 4 Fe(II)-[cytochrome c] + O2 + 8 H(+)(in) = 4 Fe(III)-[cytochrome c] + 2 H2O + 4 H(+)(out). Functionally, component of the cytochrome c oxidase, the last enzyme in the mitochondrial electron transport chain which drives oxidative phosphorylation. The respiratory chain contains 3 multisubunit complexes succinate dehydrogenase (complex II, CII), ubiquinol-cytochrome c oxidoreductase (cytochrome b-c1 complex, complex III, CIII) and cytochrome c oxidase (complex IV, CIV), that cooperate to transfer electrons derived from NADH and succinate to molecular oxygen, creating an electrochemical gradient over the inner membrane that drives transmembrane transport and the ATP synthase. Cytochrome c oxidase is the component of the respiratory chain that catalyzes the reduction of oxygen to water. Electrons originating from reduced cytochrome c in the intermembrane space (IMS) are transferred via the dinuclear copper A center (CU(A)) of subunit 2 and heme A of subunit 1 to the active site in subunit 1, a binuclear center (BNC) formed by heme A3 and copper B (CU(B)). The BNC reduces molecular oxygen to 2 water molecules using 4 electrons from cytochrome c in the IMS and 4 protons from the mitochondrial matrix. The polypeptide is Cytochrome c oxidase subunit 2, mitochondrial (COX2) (Glycine max (Soybean)).